We begin with the raw amino-acid sequence, 138 residues long: ATP synthase epsilon chain 1 (138 aa).

This sequence belongs to the ATPase epsilon chain family. F-type ATPases have 2 components, CF(1) - the catalytic core - and CF(0) - the membrane proton channel. CF(1) has five subunits: alpha(3), beta(3), gamma(1), delta(1), epsilon(1). CF(0) has three main subunits: a, b and c.

It localises to the cell inner membrane. In terms of biological role, produces ATP from ADP in the presence of a proton gradient across the membrane. The sequence is that of ATP synthase epsilon chain 1 from Syntrophotalea carbinolica (strain DSM 2380 / NBRC 103641 / GraBd1) (Pelobacter carbinolicus).